The chain runs to 177 residues: Phycocyanin PC645 beta subunit (177 aa).

Position 18 (Tyr-18) interacts with mesobiliverdin. (2R,3E)-phycocyanobilin is bound by residues Lys-28, Asn-35, and Asp-39. Cys-50, Asp-54, and Cys-61 together coordinate 15,16-dihydrobiliverdin. (2R,3E)-phycocyanobilin-binding residues include Asn-72, Arg-77, Cys-82, Arg-84, and Asp-85. Gln-148 contacts 15,16-dihydrobiliverdin. (2R,3E)-phycocyanobilin-binding residues include Pro-154, Gly-156, and Cys-158.

The protein belongs to the phycobiliprotein family. In terms of assembly, heterotetramer of 2 different alpha chains and 2 identical beta chains which form 2 alpha-beta heterodimers within the heterotetramer. Post-translationally, contains two phycocyanobilin chromophores, one mesobiliverdin chromophore and one 15,16-dihydrobiliverdin chromophore with binding mediated by both the alpha and beta subunits.

Its subcellular location is the plastid. The protein localises to the chloroplast thylakoid membrane. Functionally, light-harvesting photosynthetic tetrapyrrole chromophore-protein from the phycobiliprotein complex. In Chroomonas sp. (strain CCMP270), this protein is Phycocyanin PC645 beta subunit.